The sequence spans 186 residues: Peptidyl-tRNA hydrolase (186 aa).

Y14 contributes to the tRNA binding site. H19 functions as the Proton acceptor in the catalytic mechanism. Positions 64, 66, and 112 each coordinate tRNA.

This sequence belongs to the PTH family. Monomer.

It is found in the cytoplasm. The enzyme catalyses an N-acyl-L-alpha-aminoacyl-tRNA + H2O = an N-acyl-L-amino acid + a tRNA + H(+). Functionally, hydrolyzes ribosome-free peptidyl-tRNAs (with 1 or more amino acids incorporated), which drop off the ribosome during protein synthesis, or as a result of ribosome stalling. Its function is as follows. Catalyzes the release of premature peptidyl moieties from peptidyl-tRNA molecules trapped in stalled 50S ribosomal subunits, and thus maintains levels of free tRNAs and 50S ribosomes. The chain is Peptidyl-tRNA hydrolase from Mesoplasma florum (strain ATCC 33453 / NBRC 100688 / NCTC 11704 / L1) (Acholeplasma florum).